The chain runs to 267 residues: Thiazole synthase (267 aa).

Residue Lys107 is the Schiff-base intermediate with DXP of the active site. 1-deoxy-D-xylulose 5-phosphate contacts are provided by residues Gly168, 194 to 195, and 216 to 217; these read AG and NT.

It belongs to the ThiG family. In terms of assembly, homotetramer. Forms heterodimers with either ThiH or ThiS.

The protein resides in the cytoplasm. The catalysed reaction is [ThiS sulfur-carrier protein]-C-terminal-Gly-aminoethanethioate + 2-iminoacetate + 1-deoxy-D-xylulose 5-phosphate = [ThiS sulfur-carrier protein]-C-terminal Gly-Gly + 2-[(2R,5Z)-2-carboxy-4-methylthiazol-5(2H)-ylidene]ethyl phosphate + 2 H2O + H(+). The protein operates within cofactor biosynthesis; thiamine diphosphate biosynthesis. In terms of biological role, catalyzes the rearrangement of 1-deoxy-D-xylulose 5-phosphate (DXP) to produce the thiazole phosphate moiety of thiamine. Sulfur is provided by the thiocarboxylate moiety of the carrier protein ThiS. In vitro, sulfur can be provided by H(2)S. This chain is Thiazole synthase, found in Aquifex aeolicus (strain VF5).